The primary structure comprises 103 residues: Co-chaperonin GroES (103 aa).

The protein belongs to the GroES chaperonin family. As to quaternary structure, heptamer of 7 subunits arranged in a ring. Interacts with the chaperonin GroEL.

Its subcellular location is the cytoplasm. Its function is as follows. Together with the chaperonin GroEL, plays an essential role in assisting protein folding. The GroEL-GroES system forms a nano-cage that allows encapsulation of the non-native substrate proteins and provides a physical environment optimized to promote and accelerate protein folding. GroES binds to the apical surface of the GroEL ring, thereby capping the opening of the GroEL channel. The chain is Co-chaperonin GroES from Crocosphaera subtropica (strain ATCC 51142 / BH68) (Cyanothece sp. (strain ATCC 51142)).